The primary structure comprises 354 residues: Molybdenum import ATP-binding protein ModC (354 aa).

The region spanning 1 to 229 (MLELDFEQQL…SALRLWLQKE (229 aa)) is the ABC transporter domain. 31-38 (GLSGAGKT) is an ATP binding site. One can recognise a Mop domain in the interval 289–354 (GSSIRNILAV…IKSVSFHRQL (66 aa)).

The protein belongs to the ABC transporter superfamily. Molybdate importer (TC 3.A.1.8) family. The complex is composed of two ATP-binding proteins (ModC), two transmembrane proteins (ModB) and a solute-binding protein (ModA).

It localises to the cell inner membrane. It carries out the reaction molybdate(out) + ATP + H2O = molybdate(in) + ADP + phosphate + H(+). Functionally, part of the ABC transporter complex ModABC involved in molybdenum import. Responsible for energy coupling to the transport system. The polypeptide is Molybdenum import ATP-binding protein ModC (Photorhabdus laumondii subsp. laumondii (strain DSM 15139 / CIP 105565 / TT01) (Photorhabdus luminescens subsp. laumondii)).